An 882-amino-acid chain; its full sequence is DNA mismatch repair protein MutS (882 aa).

627–634 (GPNMAGKS) serves as a coordination point for ATP.

It belongs to the DNA mismatch repair MutS family.

In terms of biological role, this protein is involved in the repair of mismatches in DNA. It is possible that it carries out the mismatch recognition step. This protein has a weak ATPase activity. This chain is DNA mismatch repair protein MutS, found in Anaeromyxobacter sp. (strain K).